The following is a 491-amino-acid chain: Keratin, type I cytoskeletal 24 (491 aa).

A disordered region spans residues 1–23 (MFCSAQKGSCSSRVSSSGAVGSR). Residues 1 to 117 (MFCSAQKGSC…GYDGGLLSGS (117 aa)) are head. Low complexity predominate over residues 8–23 (GSCSSRVSSSGAVGSR). Positions 118–153 (EKQTMQGLNDRLANYLDKVRALEEANTDLETKIKDW) are coil 1A. The IF rod domain occupies 118 to 432 (EKQTMQGLND…RLLNGDGGGC (315 aa)). The interval 154–174 (YGRHGSGKDGPGRDYSQYCSV) is linker 1. Residues 175-266 (IEDLKNQIIS…KNHEEEMKCL (92 aa)) form a coil 1B region. A linker 12 region spans residues 267–289 (QGSSGGDVTVEMNATPGTDLTKL). A coil 2 region spans residues 290 to 428 (LNDMRAQYEA…ETYRRLLNGD (139 aa)). The interval 429–491 (GGGCDYRNLV…VSNISEVKIK (63 aa)) is tail.

This sequence belongs to the intermediate filament family. As to quaternary structure, heterotetramer of two type I and two type II keratins.

In Rattus norvegicus (Rat), this protein is Keratin, type I cytoskeletal 24 (Krt24).